Here is a 327-residue protein sequence, read N- to C-terminus: Chlorophenol reductase (327 aa).

Residues 1–24 (MKKTLGIILSISLAFSVLALPIFA) form the signal peptide. In terms of domain architecture, LysM spans 65–110 (TYYTVVSGDFFWQIAAKHGLTIDALAKLNPQIKNVNLIFPGQKILV).

Cob(I)alamin is required as a cofactor.

The protein localises to the secreted. It is found in the cell wall. Its subcellular location is the cell membrane. Its activity is regulated as follows. Inhibited by sulfide and to a lesser extent by nitrite. Its function is as follows. Reductive dechlorination of ortho-chlorophenols. Dechlorinates in the ortho position with respect to the hydroxyl group. The chain is Chlorophenol reductase from Desulfitobacterium hafniense (Desulfitobacterium frappieri).